A 354-amino-acid polypeptide reads, in one-letter code: Anthranilate phosphoribosyltransferase (354 aa).

This sequence belongs to the anthranilate phosphoribosyltransferase family.

It carries out the reaction N-(5-phospho-beta-D-ribosyl)anthranilate + diphosphate = 5-phospho-alpha-D-ribose 1-diphosphate + anthranilate. It functions in the pathway amino-acid biosynthesis; L-tryptophan biosynthesis; L-tryptophan from chorismate: step 2/5. This is Anthranilate phosphoribosyltransferase (trp4) from Schizosaccharomyces pombe (strain 972 / ATCC 24843) (Fission yeast).